The primary structure comprises 246 residues: Nodulation protein G (246 aa).

8–32 (VTGAMGGLGTAICQALAKDGCIVAA) is an NAD(+) binding site. Ser140 is a substrate binding site. Catalysis depends on Tyr153, which acts as the Proton acceptor.

It belongs to the short-chain dehydrogenases/reductases (SDR) family.

Its function is as follows. Proposed to modify Nod factor fatty acyl chain. This Azospirillum brasilense protein is Nodulation protein G (nodG).